The chain runs to 911 residues: DNA mismatch repair protein MutS (911 aa).

A compositionally biased stretch (basic and acidic residues) spans 1–10; it reads MDNKTDHKND. Residues 1-24 form a disordered region; it reads MDNKTDHKNDLNSQPVPSSAPHKE. 662–669 serves as a coordination point for ATP; that stretch reads GPNMGGKS.

This sequence belongs to the DNA mismatch repair MutS family.

This protein is involved in the repair of mismatches in DNA. It is possible that it carries out the mismatch recognition step. This protein has a weak ATPase activity. The sequence is that of DNA mismatch repair protein MutS from Bartonella quintana (strain Toulouse) (Rochalimaea quintana).